Here is a 373-residue protein sequence, read N- to C-terminus: tRNA-specific 2-thiouridylase MnmA (373 aa).

Residues 12-19 and methionine 38 each bind ATP; that span reads GMSGGVDS. Residues 98–100 are interaction with target base in tRNA; it reads NPD. Catalysis depends on cysteine 103, which acts as the Nucleophile. Cysteine 103 and cysteine 200 are disulfide-bonded. Glycine 127 is an ATP binding site. The interaction with tRNA stretch occupies residues 150–152; it reads KDQ. Catalysis depends on cysteine 200, which acts as the Cysteine persulfide intermediate. The interaction with tRNA stretch occupies residues 312-313; the sequence is RY.

This sequence belongs to the MnmA/TRMU family.

It localises to the cytoplasm. It carries out the reaction S-sulfanyl-L-cysteinyl-[protein] + uridine(34) in tRNA + AH2 + ATP = 2-thiouridine(34) in tRNA + L-cysteinyl-[protein] + A + AMP + diphosphate + H(+). Its function is as follows. Catalyzes the 2-thiolation of uridine at the wobble position (U34) of tRNA, leading to the formation of s(2)U34. The chain is tRNA-specific 2-thiouridylase MnmA from Streptococcus thermophilus (strain ATCC BAA-491 / LMD-9).